Consider the following 119-residue polypeptide: Holo-[acyl-carrier-protein] synthase (119 aa).

The Mg(2+) site is built by D5 and E51.

It belongs to the P-Pant transferase superfamily. AcpS family. The cofactor is Mg(2+).

It localises to the cytoplasm. The enzyme catalyses apo-[ACP] + CoA = holo-[ACP] + adenosine 3',5'-bisphosphate + H(+). Its function is as follows. Transfers the 4'-phosphopantetheine moiety from coenzyme A to a Ser of acyl-carrier-protein. The protein is Holo-[acyl-carrier-protein] synthase of Helicobacter pylori (strain HPAG1).